The following is a 254-amino-acid chain: NAD-dependent protein deacetylase 1 (254 aa).

Residues Val3 to Met252 enclose the Deacetylase sirtuin-type domain. NAD(+) is bound by residues Ala29, Thr33, Phe40, Arg41, Gln105, Val107, Asp108, and His123. Phe40 is a binding site for nicotinamide. Residues Val107 and Asp108 each contribute to the nicotinamide site. His123 functions as the Proton acceptor in the catalytic mechanism. Positions 131, 134, 154, and 157 each coordinate Zn(2+). The NAD(+) site is built by Thr195, Ser196, and Asn220.

The protein belongs to the sirtuin family. Class U subfamily. Zn(2+) serves as cofactor.

It is found in the cytoplasm. The catalysed reaction is N(6)-acetyl-L-lysyl-[protein] + NAD(+) + H2O = 2''-O-acetyl-ADP-D-ribose + nicotinamide + L-lysyl-[protein]. In terms of biological role, NAD-dependent protein deacetylase which modulates the activities of several enzymes which are inactive in their acetylated form. Deacetylates the N-terminal lysine residue of Alba, the major archaeal chromatin protein and that, in turn, increases Alba's DNA binding affinity, thereby repressing transcription. The protein is NAD-dependent protein deacetylase 1 of Pyrobaculum aerophilum (strain ATCC 51768 / DSM 7523 / JCM 9630 / CIP 104966 / NBRC 100827 / IM2).